The sequence spans 469 residues: Extracellular endo-alpha-(1-&gt;5)-L-arabinanase 2 (469 aa).

The N-terminal stretch at 1-26 (MFNRLFRVCFLAALIMAFTLPNSVYA) is a signal peptide. The active-site Proton acceptor is the aspartate 38. Residues aspartate 38, aspartate 122, 168–171 (NVVD), 188–190 (SYS), and 220–224 (HSRIE) contribute to the substrate site. Glutamate 224 serves as the catalytic Proton donor. Residue histidine 318 coordinates Ca(2+).

The protein belongs to the glycosyl hydrolase 43 family. In terms of assembly, homodimer. The cofactor is Ca(2+).

It is found in the secreted. It catalyses the reaction Endohydrolysis of (1-&gt;5)-alpha-arabinofuranosidic linkages in (1-&gt;5)-arabinans.. Its pathway is glycan metabolism; L-arabinan degradation. In terms of biological role, involved in the degradation of arabinan and is a key enzyme in the complete degradation of the plant cell wall. Catalyzes the internal cleavage of alpha-(1-&gt;5)-L-arabinofuranosyl residues of the alpha-1,5-L-arabinan to produce arabino-oligosaccharides and L-arabinose. It is also active toward linear branched sugar beet arabinan, and pectin from apple. The protein is Extracellular endo-alpha-(1-&gt;5)-L-arabinanase 2 (abn2) of Bacillus subtilis (strain 168).